We begin with the raw amino-acid sequence, 600 residues long: Cationic amino acid transporter 4, vacuolar (600 aa).

At 1 to 32 (MNSLVRRKQVDSVHLIKNDGPHQLAKKLSAVD) the chain is on the cytoplasmic side. A helical transmembrane segment spans residues 33-53 (LVAIGVGTTIGAGVYILVGTV). Residues 54-60 (AREHTGP) are Vacuolar-facing. A helical membrane pass occupies residues 61–81 (ALAVSFFIAGVAAALSACCYA). Residues 82 to 92 (ELASRCPSAGS) lie on the Cytoplasmic side of the membrane. The helical transmembrane segment at 93–115 (AYHYAYICLGEGIAWLVGWALVL) threads the bilayer. Topologically, residues 116 to 152 (DYTIGGSAIARGITPNLASFFGGLDNLPVFLARQTIP) are vacuolar. Residues 153–173 (GVGIVVDPCAALLIMIVTILL) traverse the membrane as a helical segment. The Cytoplasmic portion of the chain corresponds to 174-184 (CFGIKESSTVQ). The helical transmembrane segment at 185 to 205 (AIVTSVNVCTLVFIIVVGGYL) threads the bilayer. The Vacuolar portion of the chain corresponds to 206–220 (ACKTGWVGYDLPSGY). A helical transmembrane segment spans residues 221–241 (FPFGLNGILAGSAVVFFSYIG). Residues 242–264 (FDTVTSTAEEVKNPQRDLPLGIG) lie on the Cytoplasmic side of the membrane. Residues 265–285 (IALLICCILYMLLSVVIVGLV) traverse the membrane as a helical segment. The Vacuolar segment spans residues 286–308 (PYYSLNPDTPISSAFGDSGMQWA). The chain crosses the membrane as a helical span at residues 309 to 329 (AYILTTGAITALCASLLGSLL). The Cytoplasmic segment spans residues 330-360 (AQPRIFMAMARDGLLPAFFSEISPRTQVPVK). A helical membrane pass occupies residues 361–381 (STIAIGVLAAALAFFMDVAQL). Residue S382 is a topological domain, vacuolar. Residues 383-403 (EMVSVGTLMAFTAVAVCVLVL) traverse the membrane as a helical segment. Residues 404–462 (RYVPPDGVPLSSSSQTLSDTDESRAETENFLVDAIESSDSPLLGNETARDEKYFGKRRK) are Cytoplasmic-facing. The chain crosses the membrane as a helical span at residues 463–483 (IAAWSIALVCIGVLGLASAAS). The Vacuolar portion of the chain corresponds to 484–492 (AERLPSFPR). Residues 493 to 513 (FTICGVSAVILLGSLITLGYI) traverse the membrane as a helical segment. The Cytoplasmic segment spans residues 514 to 528 (DEDEERHNFGHKGGF). A helical membrane pass occupies residues 529-549 (LCPFVPYLPVLCILINTYLII). Position 550 (N550) is a topological domain, vacuolar. Residues 551–571 (IGAGTWIRVLIWLLIGSMIYI) form a helical membrane-spanning segment. Over 572–600 (FYGRSHSLLNNAVYVPTMTCTRKTTDHLA) the chain is Cytoplasmic.

The protein belongs to the amino acid-polyamine-organocation (APC) superfamily. Cationic amino acid transporter (CAT) (TC 2.A.3.3) family. As to expression, expressed in roots, stems, flowers, and leaves.

It localises to the vacuole membrane. Functionally, permease involved in the transport of the cationic amino acids. The protein is Cationic amino acid transporter 4, vacuolar (CAT4) of Arabidopsis thaliana (Mouse-ear cress).